The primary structure comprises 542 residues: Putative cysteine ligase BshC (542 aa).

Positions 458-487 (VAKNAAIIQAQIEFLQQTLERALLSKHEVE) form a coiled coil.

Belongs to the BshC family.

Involved in bacillithiol (BSH) biosynthesis. May catalyze the last step of the pathway, the addition of cysteine to glucosamine malate (GlcN-Mal) to generate BSH. This is Putative cysteine ligase BshC from Geobacillus thermodenitrificans (strain NG80-2).